The following is a 559-amino-acid chain: Protein pp71 (559 aa).

C218 is modified (S-nitrosocysteine; by host). Residue T223 is modified to Phosphothreonine. Disordered stretches follow at residues 404–440 (EFLP…TPLS) and 530–559 (SSTL…RPRI). Residues 415–430 (TEEEEEEEEEDDEDDL) are compositionally biased toward acidic residues. 2 stretches are compositionally biased toward low complexity: residues 431–440 (SSTPTPTPLS) and 543–559 (PIST…RPRI).

It belongs to the herpesviridae pp71 family. As to quaternary structure, interacts with the host protein DAXX; this interaction takes place at ND10 and induces the reversal of DAXX-mediated repression of viral transcription. Interacts with UL35. Interacts with host TMEM173/STING1; this interaction inhibits the cGAS/STING pathway. Interacts with host RB1; this interaction mediates RB1 proteasomal degradation. S-nitrosylation limits ability to undermine the cGAS/STING antiviral pathway.

It is found in the virion tegument. Its subcellular location is the host nucleus. It localises to the host endoplasmic reticulum. Its function is as follows. Stimulates viral immediate-early (IE) transcription. Plays a role in the inhibition of the host innate repsonse by targeting STING1 and thus the cGAS-STING pathway. Also counteracts host DAXX-mediated repression of viral transcription. Displaces a DAXX-binding protein, ATRX, from nuclear domain 10 sites (ND10) shortly after infection. Increases the basal level of SUMOylated DAXX in infected cells. Stimulates quiescent cells to re-enter the cell cycle, proceed through G1 and enter the S phase. Interacts with hypophosphorylated forms of RB1 and induces their degradation by the proteasome without involving ubiquitin conjugation. The protein is Protein pp71 (UL82) of Homo sapiens (Human).